The chain runs to 502 residues: tRNA-2-methylthio-N(6)-dimethylallyladenosine synthase (502 aa).

One can recognise an MTTase N-terminal domain in the interval 12–129 (RTYQVRTYGC…LPVLLERARH (118 aa)). Positions 21, 58, 92, 166, 170, and 173 each coordinate [4Fe-4S] cluster. The Radical SAM core domain maps to 152–383 (RESTYAGWVS…ACVEEITWAE (232 aa)). One can recognise a TRAM domain in the interval 385 to 455 (RRLVGETVEV…PHHLNADGEP (71 aa)). The segment at 451–502 (ADGEPLAHRRTPAGDAAEAGRRPRTAGVSLGLPTVGAPPSPVPPAASSACAC) is disordered.

Belongs to the methylthiotransferase family. MiaB subfamily. In terms of assembly, monomer. [4Fe-4S] cluster is required as a cofactor.

It is found in the cytoplasm. It carries out the reaction N(6)-dimethylallyladenosine(37) in tRNA + (sulfur carrier)-SH + AH2 + 2 S-adenosyl-L-methionine = 2-methylsulfanyl-N(6)-dimethylallyladenosine(37) in tRNA + (sulfur carrier)-H + 5'-deoxyadenosine + L-methionine + A + S-adenosyl-L-homocysteine + 2 H(+). In terms of biological role, catalyzes the methylthiolation of N6-(dimethylallyl)adenosine (i(6)A), leading to the formation of 2-methylthio-N6-(dimethylallyl)adenosine (ms(2)i(6)A) at position 37 in tRNAs that read codons beginning with uridine. This Salinispora arenicola (strain CNS-205) protein is tRNA-2-methylthio-N(6)-dimethylallyladenosine synthase.